A 367-amino-acid polypeptide reads, in one-letter code: MTDEPLTDRPPAVDLGRLLIDAHAESDEHAVEAALRPRRLDEFVGQQRVRDQLSLILDGAKQRGRPPDHILLSGPPGLGKTTLAMIVAAELNTPIRVTSGPAIQHAGDLAAVLTQLSEGEVLFLDEIHRMARPAEEMLYLAMEDFRVDVVVGKGPGASVIPLELAPFTLIGATTRTGLLPGPLRDRFGFTARLDFYEPADLERIVHRSARLLDVRITPDGAAEIARRSRGTPRIANRLLRRVRDYAEVRADGVITCEVAQAALAVYEVDEHGLDRLDRAVLDALVRRFGGGPVGLGTVAVAVGEEPETVEEVAEPFLFRAGFLIRTPRGRMATAAAWRHLGITPPPEALGAAQLAFEIDRDAGEPTA.

The interval 2–196 is large ATPase domain (RuvB-L); the sequence is TDEPLTDRPP…FGFTARLDFY (195 aa). ATP is bound by residues Leu-35, Arg-36, Gly-77, Lys-80, Thr-81, Thr-82, 143–145, Arg-186, Tyr-196, and Arg-233; that span reads EDF. A Mg(2+)-binding site is contributed by Thr-81. Positions 197–267 are small ATPAse domain (RuvB-S); it reads EPADLERIVH…VAQAALAVYE (71 aa). Positions 270–367 are head domain (RuvB-H); the sequence is EHGLDRLDRA…IDRDAGEPTA (98 aa). The DNA site is built by Arg-325 and Arg-330.

Belongs to the RuvB family. Homohexamer. Forms an RuvA(8)-RuvB(12)-Holliday junction (HJ) complex. HJ DNA is sandwiched between 2 RuvA tetramers; dsDNA enters through RuvA and exits via RuvB. An RuvB hexamer assembles on each DNA strand where it exits the tetramer. Each RuvB hexamer is contacted by two RuvA subunits (via domain III) on 2 adjacent RuvB subunits; this complex drives branch migration. In the full resolvosome a probable DNA-RuvA(4)-RuvB(12)-RuvC(2) complex forms which resolves the HJ.

It localises to the cytoplasm. It catalyses the reaction ATP + H2O = ADP + phosphate + H(+). Functionally, the RuvA-RuvB-RuvC complex processes Holliday junction (HJ) DNA during genetic recombination and DNA repair, while the RuvA-RuvB complex plays an important role in the rescue of blocked DNA replication forks via replication fork reversal (RFR). RuvA specifically binds to HJ cruciform DNA, conferring on it an open structure. The RuvB hexamer acts as an ATP-dependent pump, pulling dsDNA into and through the RuvAB complex. RuvB forms 2 homohexamers on either side of HJ DNA bound by 1 or 2 RuvA tetramers; 4 subunits per hexamer contact DNA at a time. Coordinated motions by a converter formed by DNA-disengaged RuvB subunits stimulates ATP hydrolysis and nucleotide exchange. Immobilization of the converter enables RuvB to convert the ATP-contained energy into a lever motion, pulling 2 nucleotides of DNA out of the RuvA tetramer per ATP hydrolyzed, thus driving DNA branch migration. The RuvB motors rotate together with the DNA substrate, which together with the progressing nucleotide cycle form the mechanistic basis for DNA recombination by continuous HJ branch migration. Branch migration allows RuvC to scan DNA until it finds its consensus sequence, where it cleaves and resolves cruciform DNA. The protein is Holliday junction branch migration complex subunit RuvB of Acidothermus cellulolyticus (strain ATCC 43068 / DSM 8971 / 11B).